The primary structure comprises 749 residues: MEENSADIENRPVAAFRPAVSVPMPVLPQDGEVFVGPGGKKDAQKIGLGLSKLSSKRKDDIQMAKKYAMDISIKQILLRQQKQQQENQQRQQMYSQALSIMSRIYVGSISFEIREDMLRRAFDPFGPIKSINMSWDPATGHHKTFAFVEYEVPEAALLAQESMNGQMLGGRNLKVNSMMFQEMRLPQNMPQAQPIIDMVQKDAKKYFRVYVSSVHPDLSETDLKSVFEAFGEIVKCQLARAPTGRGHRGFGYLEFNNLTSQSEAIAGMNMFDLGGQYLRVGKCVTPPDALTYLQPASVSAIPASVSVACAAITAKVMAAEAAAGSSPKTPSESGGSRAASPAPRAQSPATPSSSLPTDIENKAVISSPKKEPEEIEVPPLPPSAPDVVKDEPMEIEEEEEYTIPEEKPKPVAIVPPPGLAIPSLVAPPGLIAPTEIGIVVPNPSFLAQQQQKIEEKIEEEEEARTERVKLSTSQRKKMKREKLNQMTFEEKMAQVLGQQKAVQNQRMADPVTFGALDDTVAWKDPSNEDQTSEDGKMLAIMGPGRGGDNVASMALALMDGGSSLMLANNAKAKEAAAALALEPKKKKKVKEGKKIQPKLNTAQALAAAAKAGEMSDALKNEVMNSEDASLASQEGLEIRGNDARHLLMTKLMRTNRSNVIVLRNMVTPQDIDEFLEGEIREECGKYGNVIDVVIANFASSGLVKIFVKYSDSMQVDRAKAALDGRFFGGNTVKAEAYDQILFDHADYTG.

RRM domains follow at residues 102–176 (SRIY…LKVN) and 207–285 (FRVY…KCVT). Disordered stretches follow at residues 323–388 (AGSS…PDVV) and 457–480 (IEEEEEARTERVKLSTSQRKKMKR). The segment covering 330-354 (PSESGGSRAASPAPRAQSPATPSSS) has biased composition (low complexity). The region spanning 658 to 739 (NVIVLRNMVT…NTVKAEAYDQ (82 aa)) is the RRM 3; atypical domain.

Belongs to the RRM half pint family.

Its subcellular location is the nucleus. Its function is as follows. DNA- and RNA-binding protein, involved in several nuclear processes such as pre-mRNA splicing, apoptosis and transcription regulation. Ensures the correct splicing of genes involved in immunity to promote longevity in response to infection by pathogenic bacteria such as S.aureus. This Caenorhabditis elegans protein is Poly(U)-binding-splicing factor rnp-6.